Here is a 1362-residue protein sequence, read N- to C-terminus: ATP-dependent RNA helicase dhx29 (1362 aa).

Residues 1 to 10 (MGGKNKKNRH) are compositionally biased toward basic residues. Residues 1–76 (MGGKNKKNRH…FASSSDSGVS (76 aa)) form a disordered region. The span at 18–27 (GATAAANRPR) shows a compositional bias: low complexity. Over residues 28 to 41 (AAAEPRPGGEDAAK) the composition is skewed to basic and acidic residues. The span at 66 to 76 (SFASSSDSGVS) shows a compositional bias: low complexity. Residues 89–109 (EAKLEKRIISLINEHKKLNSN) adopt a coiled-coil conformation. Disordered stretches follow at residues 182–215 (QRAR…LKGN) and 229–257 (EQGS…DPNE). Residues 231-242 (GSDDDDDDDDVK) are compositionally biased toward acidic residues. Basic and acidic residues predominate over residues 243–257 (EEEKETTLEKFDPNE). A coiled-coil region spans residues 285-305 (QKEAQERIRGYQQEMKSLEDH). The interval 317 to 336 (VKSESKQPKPALPPSEDEPL) is disordered. The Helicase ATP-binding domain occupies 576-749 (LETLKRHRVI…FTHCPIIRIS (174 aa)). 589 to 596 (GETGSGKS) is an ATP binding site. The DEAH box motif lies at 696-699 (DEVH). In terms of domain architecture, Helicase C-terminal spans 852-1021 (DISPEYRNVE…ELCLHIMKCD (170 aa)).

The protein belongs to the DEAD box helicase family. DEAH subfamily. In terms of assembly, part of the 43S pre-initiation complex (PIC).

It is found in the cytoplasm. The enzyme catalyses ATP + H2O = ADP + phosphate + H(+). ATP-binding RNA helicase involved in translation initiation. Part of the 43S pre-initiation complex that is required for efficient initiation on mRNAs of higher eukaryotes with structured 5'-UTRs by promoting efficient NTPase-dependent 48S complex formation. Specifically binds to the 40S ribosome near the mRNA entrance. Does not possess a processive helicase activity. The polypeptide is ATP-dependent RNA helicase dhx29 (Xenopus laevis (African clawed frog)).